A 100-amino-acid chain; its full sequence is Nucleoid-associated protein RoseRS_1534 (100 aa).

Belongs to the YbaB/EbfC family. As to quaternary structure, homodimer.

It localises to the cytoplasm. It is found in the nucleoid. Its function is as follows. Binds to DNA and alters its conformation. May be involved in regulation of gene expression, nucleoid organization and DNA protection. The polypeptide is Nucleoid-associated protein RoseRS_1534 (Roseiflexus sp. (strain RS-1)).